Reading from the N-terminus, the 106-residue chain is Iron-sulfur cluster assembly protein CyaY (106 aa).

The protein belongs to the frataxin family.

Involved in iron-sulfur (Fe-S) cluster assembly. May act as a regulator of Fe-S biogenesis. This chain is Iron-sulfur cluster assembly protein CyaY, found in Colwellia psychrerythraea (strain 34H / ATCC BAA-681) (Vibrio psychroerythus).